A 332-amino-acid chain; its full sequence is Cell division protein ZipA (332 aa).

The Periplasmic segment spans residues 1 to 6 (MMQDLR). The helical transmembrane segment at 7 to 27 (LILIVVGAIAIIALLLHGLWT) threads the bilayer. Topologically, residues 28-332 (SRKERSSLFR…RLREVLENNA (305 aa)) are cytoplasmic. Basic and acidic residues-rich tracts occupy residues 34–51 (SLFR…REQS) and 61–72 (GEVRVRSAHPED). Positions 34–184 (SLFRDRPAKR…PAVAHEPQPA (151 aa)) are disordered. A compositionally biased stretch (low complexity) spans 98–107 (PAPRAVQPAA). The span at 121–136 (DDILLDNYAQEEDDEP) shows a compositional bias: acidic residues. Residues 155 to 171 (PAAEPAFHAEPAHQPQP) are compositionally biased toward low complexity.

This sequence belongs to the ZipA family. Interacts with FtsZ via their C-terminal domains.

It localises to the cell inner membrane. Essential cell division protein that stabilizes the FtsZ protofilaments by cross-linking them and that serves as a cytoplasmic membrane anchor for the Z ring. Also required for the recruitment to the septal ring of downstream cell division proteins. This Serratia proteamaculans (strain 568) protein is Cell division protein ZipA.